A 330-amino-acid chain; its full sequence is Phenylalanine--tRNA ligase alpha subunit (330 aa).

Mg(2+) is bound at residue Glu246.

This sequence belongs to the class-II aminoacyl-tRNA synthetase family. Phe-tRNA synthetase alpha subunit type 1 subfamily. As to quaternary structure, tetramer of two alpha and two beta subunits. Mg(2+) serves as cofactor.

It is found in the cytoplasm. It catalyses the reaction tRNA(Phe) + L-phenylalanine + ATP = L-phenylalanyl-tRNA(Phe) + AMP + diphosphate + H(+). This chain is Phenylalanine--tRNA ligase alpha subunit, found in Sulfurimonas denitrificans (strain ATCC 33889 / DSM 1251) (Thiomicrospira denitrificans (strain ATCC 33889 / DSM 1251)).